The primary structure comprises 381 residues: Outer membrane protein assembly factor BamB (381 aa).

Residues 1 to 22 (MNLLKRYAAPVACAAAVLVFAA) form the signal peptide. Cys23 is lipidated: N-palmitoyl cysteine. Cys23 carries the S-diacylglycerol cysteine lipid modification.

Belongs to the BamB family. In terms of assembly, part of the Bam complex.

The protein localises to the cell outer membrane. Functionally, part of the outer membrane protein assembly complex, which is involved in assembly and insertion of beta-barrel proteins into the outer membrane. This is Outer membrane protein assembly factor BamB from Burkholderia pseudomallei (strain K96243).